The following is a 56-amino-acid chain: Photosystem II reaction center protein K (56 aa).

A propeptide spanning residues 1–19 is cleaved from the precursor; the sequence is MFNIFLDDAFIHSNNPFFG. Residues 35–55 traverse the membrane as a helical segment; sequence MPIIPVLSFLLAFVWQAAVSF.

Belongs to the PsbK family. In terms of assembly, PSII is composed of 1 copy each of membrane proteins PsbA, PsbB, PsbC, PsbD, PsbE, PsbF, PsbH, PsbI, PsbJ, PsbK, PsbL, PsbM, PsbT, PsbX, PsbY, PsbZ, Psb30/Ycf12, at least 3 peripheral proteins of the oxygen-evolving complex and a large number of cofactors. It forms dimeric complexes.

The protein resides in the plastid. Its subcellular location is the chloroplast thylakoid membrane. One of the components of the core complex of photosystem II (PSII). PSII is a light-driven water:plastoquinone oxidoreductase that uses light energy to abstract electrons from H(2)O, generating O(2) and a proton gradient subsequently used for ATP formation. It consists of a core antenna complex that captures photons, and an electron transfer chain that converts photonic excitation into a charge separation. The sequence is that of Photosystem II reaction center protein K from Pinus thunbergii (Japanese black pine).